Here is a 701-residue protein sequence, read N- to C-terminus: Elongation factor G (701 aa).

Residues 11 to 287 (TKVRNIGIMA…AVIDYLPSPL (277 aa)) enclose the tr-type G domain. GTP contacts are provided by residues 20–27 (AHIDAGKT), 84–88 (DTPGH), and 138–141 (NKMD).

Belongs to the TRAFAC class translation factor GTPase superfamily. Classic translation factor GTPase family. EF-G/EF-2 subfamily.

The protein localises to the cytoplasm. Its function is as follows. Catalyzes the GTP-dependent ribosomal translocation step during translation elongation. During this step, the ribosome changes from the pre-translocational (PRE) to the post-translocational (POST) state as the newly formed A-site-bound peptidyl-tRNA and P-site-bound deacylated tRNA move to the P and E sites, respectively. Catalyzes the coordinated movement of the two tRNA molecules, the mRNA and conformational changes in the ribosome. In Mycobacterium marinum (strain ATCC BAA-535 / M), this protein is Elongation factor G.